Here is a 1079-residue protein sequence, read N- to C-terminus: Lon protease homolog, mitochondrial (1079 aa).

Residues 1 to 60 (MLRPRTYVRKLAWRCPRKSQLGLRLATSVSSHKSLPLPMNFDISHSQSAFRAYQDIIHRN) constitute a mitochondrion transit peptide. A compositionally biased stretch (basic and acidic residues) spans 61–116 (KSVGDDEPSQRSENENNPSESDKDSNQDPETPKKDKESENDKEPEKEKDIENDNKV). 2 disordered regions span residues 61–158 (KSVG…VDPV) and 262–285 (LTTPSSEKEAKSEEPSKEDAESFP). Positions 117–131 (SSESNENVTLASSNT) are enriched in polar residues. The span at 132–143 (GGAAPPNGNNNG) shows a compositional bias: low complexity. The Lon N-terminal domain occupies 165–391 (LLAIPMKDRP…RALELLKVEL (227 aa)). Over residues 262–281 (LTTPSSEKEAKSEEPSKEDA) the composition is skewed to basic and acidic residues. 543–550 (GPPGTGKT) serves as a coordination point for ATP. Basic and acidic residues predominate over residues 756-765 (ALDSSKEKEG). Residues 756–832 (ALDSSKEKEG…SEEDQQPEPK (77 aa)) form a disordered region. Residues 768 to 779 (ASSEEANVNSES) are compositionally biased toward low complexity. Polar residues predominate over residues 780–802 (TKSNTSQAEPVAESSTDISTKSK). A compositionally biased stretch (basic and acidic residues) spans 803 to 818 (VASEKIETKEKKETNK). One can recognise a Lon proteolytic domain in the interval 865-1053 (FPPPGVATGL…QEVFDKIFPN (189 aa)). Residues Ser-959 and Lys-1002 contribute to the active site.

This sequence belongs to the peptidase S16 family. In terms of assembly, homohexamer or homoheptamer. Organized in a ring with a central cavity.

It localises to the mitochondrion matrix. The catalysed reaction is Hydrolysis of proteins in presence of ATP.. Functionally, ATP-dependent serine protease that mediates the selective degradation of misfolded, unassembled or oxidatively damaged polypeptides as well as certain short-lived regulatory proteins in the mitochondrial matrix. May also have a chaperone function in the assembly of inner membrane protein complexes. Participates in the regulation of mitochondrial gene expression and in the maintenance of the integrity of the mitochondrial genome. Binds to mitochondrial DNA in a site-specific manner. This chain is Lon protease homolog, mitochondrial, found in Debaryomyces hansenii (strain ATCC 36239 / CBS 767 / BCRC 21394 / JCM 1990 / NBRC 0083 / IGC 2968) (Yeast).